The following is a 193-amino-acid chain: Acyl-homoserine-lactone synthase (193 aa).

This sequence belongs to the autoinducer synthase family.

The catalysed reaction is a fatty acyl-[ACP] + S-adenosyl-L-methionine = an N-acyl-L-homoserine lactone + S-methyl-5'-thioadenosine + holo-[ACP] + H(+). In terms of biological role, required for the synthesis of N-(3-oxodecanoyl)-L-homoserine lactone (ODHL), an autoinducer molecule which binds to VanR. The chain is Acyl-homoserine-lactone synthase (vanI) from Vibrio anguillarum (Listonella anguillarum).